The primary structure comprises 116 residues: NADH-ubiquinone oxidoreductase chain 3 (116 aa).

A run of 3 helical transmembrane segments spans residues 3–23, 56–76, and 87–107; these read LIMT…TVSF, FFLV…LLPL, and GTFF…IYEW.

This sequence belongs to the complex I subunit 3 family.

It localises to the mitochondrion membrane. The catalysed reaction is a ubiquinone + NADH + 5 H(+)(in) = a ubiquinol + NAD(+) + 4 H(+)(out). Functionally, core subunit of the mitochondrial membrane respiratory chain NADH dehydrogenase (Complex I) that is believed to belong to the minimal assembly required for catalysis. Complex I functions in the transfer of electrons from NADH to the respiratory chain. The immediate electron acceptor for the enzyme is believed to be ubiquinone. This Cyprinus carpio (Common carp) protein is NADH-ubiquinone oxidoreductase chain 3 (MT-ND3).